The primary structure comprises 291 residues: MNDNNNNNEFKPENLESLNNTEFHISIKDITGKEFNGPFELFYSLIKERKMDILNINLVEVIQLYVDYINNYLTKLKIDDLTEYLLMATYLLEQKSKRILPSMDTEEKISKDIERDKYIQRLLVYKQYQEIVPKLMEKLERRSRMFEKPTQSGEDKESLLKEFQDNSYVPAMDLDVILKAMQKVYLKLVTTKKTKSPKDNVKLIDVSEISIDDVEKEIREFLEPFPHLYKISFMDYFKNIPDEKFTKRYFVVAFVAILVLVRNGHIQLEQNSSDENIFIVKIDKEVESNEY.

It belongs to the ScpA family. As to quaternary structure, component of a cohesin-like complex composed of ScpA, ScpB and the Smc homodimer, in which ScpA and ScpB bind to the head domain of Smc. The presence of the three proteins is required for the association of the complex with DNA.

It is found in the cytoplasm. Functionally, participates in chromosomal partition during cell division. May act via the formation of a condensin-like complex containing Smc and ScpB that pull DNA away from mid-cell into both cell halves. The chain is Segregation and condensation protein A from Malacoplasma penetrans (strain HF-2) (Mycoplasma penetrans).